The chain runs to 442 residues: Transforming growth factor beta-2 proprotein (442 aa).

The signal sequence occupies residues 1 to 20; sequence MHYCVLRTFLLLHLVPVALS. Residues Asn72, Asn168, and Asn269 are each glycosylated (N-linked (GlcNAc...) asparagine). 4 disulfides stabilise this stretch: Cys337–Cys346, Cys345–Cys408, Cys374–Cys439, and Cys378–Cys441.

The protein belongs to the TGF-beta family. Interacts with the serine proteases, HTRA1 and HTRA3. Interacts with ASPN. Interacts with MFAP5. As to quaternary structure, interacts with Transforming growth factor beta-2 (TGF-beta-2) chain; interaction is non-covalent and maintains (TGF-beta-2) in a latent state. Interacts with LRRC32/GARP; leading to regulate activation of TGF-beta-2. Interacts with NREP; the interaction results in a decrease in TGFB2 autoinduction. In terms of assembly, transforming growth factor beta-2: Homodimer; disulfide-linked. Transforming growth factor beta-2: Interacts with TGF-beta receptors (TGFBR1 and TGFBR2), leading to signal transduction. Post-translationally, the precursor proprotein is cleaved in the Golgi apparatus to form Transforming growth factor beta-2 (TGF-beta-2) and Latency-associated peptide (LAP) chains, which remain non-covalently linked, rendering TGF-beta-2 inactive. Expressed in cardiomyocytes. As to expression, expressed in the aorta, primary bronchus, uterus, heart, skeletal muscle, sciatic nerve and spinal cord but not in the intestine.

The protein resides in the secreted. It localises to the extracellular space. It is found in the extracellular matrix. Its function is as follows. Precursor of the Latency-associated peptide (LAP) and Transforming growth factor beta-2 (TGF-beta-2) chains, which constitute the regulatory and active subunit of TGF-beta-2, respectively. Functionally, required to maintain the Transforming growth factor beta-2 (TGF-beta-2) chain in a latent state during storage in extracellular matrix. Associates non-covalently with TGF-beta-2 and regulates its activation via interaction with 'milieu molecules', such as LTBP1 and LRRC32/GARP, that control activation of TGF-beta-2. In terms of biological role, multifunctional protein that regulates various processes such as angiogenesis and heart development. Activation into mature form follows different steps: following cleavage of the proprotein in the Golgi apparatus, Latency-associated peptide (LAP) and Transforming growth factor beta-2 (TGF-beta-2) chains remain non-covalently linked rendering TGF-beta-2 inactive during storage in extracellular matrix. At the same time, LAP chain interacts with 'milieu molecules', such as LTBP1 and LRRC32/GARP, that control activation of TGF-beta-2 and maintain it in a latent state during storage in extracellular milieus. Once activated following release of LAP, TGF-beta-2 acts by binding to TGF-beta receptors (TGFBR1 and TGFBR2), which transduce signal. The polypeptide is Transforming growth factor beta-2 proprotein (Tgfb2) (Rattus norvegicus (Rat)).